A 392-amino-acid chain; its full sequence is Cobalt-precorrin-5B C(1)-methyltransferase (392 aa).

This sequence belongs to the CbiD family.

The catalysed reaction is Co-precorrin-5B + S-adenosyl-L-methionine = Co-precorrin-6A + S-adenosyl-L-homocysteine. It functions in the pathway cofactor biosynthesis; adenosylcobalamin biosynthesis; cob(II)yrinate a,c-diamide from sirohydrochlorin (anaerobic route): step 6/10. In terms of biological role, catalyzes the methylation of C-1 in cobalt-precorrin-5B to form cobalt-precorrin-6A. This is Cobalt-precorrin-5B C(1)-methyltransferase from Pelobacter propionicus (strain DSM 2379 / NBRC 103807 / OttBd1).